The primary structure comprises 135 residues: Large ribosomal subunit protein uL16c (135 aa).

The protein belongs to the universal ribosomal protein uL16 family. In terms of assembly, part of the 50S ribosomal subunit.

The protein localises to the plastid. It is found in the chloroplast. This Drimys granadensis protein is Large ribosomal subunit protein uL16c.